Reading from the N-terminus, the 625-residue chain is Glutamyl-tRNA(Gln) amidotransferase subunit E (625 aa).

This sequence belongs to the GatB/GatE family. GatE subfamily. In terms of assembly, heterodimer of GatD and GatE.

The enzyme catalyses L-glutamyl-tRNA(Gln) + L-glutamine + ATP + H2O = L-glutaminyl-tRNA(Gln) + L-glutamate + ADP + phosphate + H(+). Its function is as follows. Allows the formation of correctly charged Gln-tRNA(Gln) through the transamidation of misacylated Glu-tRNA(Gln) in organisms which lack glutaminyl-tRNA synthetase. The reaction takes place in the presence of glutamine and ATP through an activated gamma-phospho-Glu-tRNA(Gln). The GatDE system is specific for glutamate and does not act on aspartate. The polypeptide is Glutamyl-tRNA(Gln) amidotransferase subunit E (Caldivirga maquilingensis (strain ATCC 700844 / DSM 13496 / JCM 10307 / IC-167)).